The following is a 704-amino-acid chain: Elongation factor G 1 (704 aa).

Residues 8-291 (ERYRNIGISA…AVIDYLPSPA (284 aa)) form the tr-type G domain. GTP is bound by residues 17 to 24 (AHIDAGKT), 88 to 92 (DTPGH), and 142 to 145 (NKMD).

It belongs to the TRAFAC class translation factor GTPase superfamily. Classic translation factor GTPase family. EF-G/EF-2 subfamily.

It localises to the cytoplasm. Its function is as follows. Catalyzes the GTP-dependent ribosomal translocation step during translation elongation. During this step, the ribosome changes from the pre-translocational (PRE) to the post-translocational (POST) state as the newly formed A-site-bound peptidyl-tRNA and P-site-bound deacylated tRNA move to the P and E sites, respectively. Catalyzes the coordinated movement of the two tRNA molecules, the mRNA and conformational changes in the ribosome. The chain is Elongation factor G 1 from Burkholderia mallei (strain ATCC 23344).